Consider the following 885-residue polypeptide: DNA mismatch repair protein MutS (885 aa).

626-633 (GPNMGGKS) serves as a coordination point for ATP.

This sequence belongs to the DNA mismatch repair MutS family.

In terms of biological role, this protein is involved in the repair of mismatches in DNA. It is possible that it carries out the mismatch recognition step. This protein has a weak ATPase activity. In Burkholderia lata (strain ATCC 17760 / DSM 23089 / LMG 22485 / NCIMB 9086 / R18194 / 383), this protein is DNA mismatch repair protein MutS.